Here is a 756-residue protein sequence, read N- to C-terminus: Putative beta-xylosidase (756 aa).

Residues 1–18 form the signal peptide; it reads MKKLLFTFLVSTGTIFFS. Cysteine 19 is lipidated: N-palmitoyl cysteine. A lipid anchor (S-diacylglycerol cysteine) is attached at cysteine 19.

It belongs to the glycosyl hydrolase 3 family.

Its subcellular location is the cell outer membrane. Its function is as follows. Glycoside hydrolase probably involved in ulvan degradation. Ulvan is the main polysaccharide component of the Ulvales (green seaweed) cell wall. It is composed of disaccharide building blocks comprising 3-sulfated rhamnose (Rha3S) linked to D-glucuronic acid (GlcA), L-iduronic acid (IduA), or D-xylose (Xyl). In Formosa agariphila (strain DSM 15362 / KCTC 12365 / LMG 23005 / KMM 3901 / M-2Alg 35-1), this protein is Putative beta-xylosidase.